The sequence spans 120 residues: Small ribosomal subunit protein uS11 (120 aa).

This sequence belongs to the universal ribosomal protein uS11 family. As to quaternary structure, part of the 30S ribosomal subunit. Interacts with proteins S7 and S18. Binds to IF-3.

Its function is as follows. Located on the platform of the 30S subunit, it bridges several disparate RNA helices of the 16S rRNA. Forms part of the Shine-Dalgarno cleft in the 70S ribosome. In Neorickettsia sennetsu (strain ATCC VR-367 / Miyayama) (Ehrlichia sennetsu), this protein is Small ribosomal subunit protein uS11.